The sequence spans 693 residues: MIQSAAPSCRRWWALGFAAVALWVDSTSGWTTQRPPMAGLRRFQSSAWYMSSSSTEKPTTSGTINGGGGKQKAASQPKKTAGIVYDAQKIRNFSIIAHIDHGKSTLADRLLETTQTVAQRDMEAQLLDNMDLERERGITIKLQAARVLYQARDGEMYCLNLIDTPGHVDFSYEVSRSLAACEGALLVVDASQGIEAQTLANVYLALENDLEIIPILNKIDLPAADPERVAEEIEATIGLDCSGIVHASAKTGIGIDDILERIVQMVPPPPAATGGPFRALIFDSYYDAYRGVIVFFRVMDGEVSQGDKVRFLASDAEHDVTEVGIMQPNQVPVDCLHAGEVGYLWGNIKDVLDARVGDTIVLAKEYKESASKGKSPPIEALPGYADSVPMVYCGLFPVDADQYESLRDALGKLRLNDAALSYEPESSGAMGFGFRCGFLGLLHMEIVQERLQREYDIDLIVTAPSVVYKVKKEHQEEFFIDTPAKMPDLGRNDVALEPYVRMEVLTPSEYNGAIIELGQERRGDLIDIKFLTPTRSTIVYELPLAEVITDFFDQLKSRTKGYASMEYSLIDYRASDLVRLDVKINYEMAPPLACVVHRDKAQSIGRRLCASLKDLIPRQMFKIPIQACIGVKVIASESISPMRKDVLAKCYGGDISRKKKLLQKQAKGKKRMKSIGKVNVPQEAFMAVLKLNE.

Over residues 51–63 (SSSSTEKPTTSGT) the composition is skewed to polar residues. The tract at residues 51–78 (SSSSTEKPTTSGTINGGGGKQKAASQPK) is disordered. The tr-type G domain maps to 88–270 (QKIRNFSIIA…RIVQMVPPPP (183 aa)). GTP contacts are provided by residues 97 to 104 (AHIDHGKS), 163 to 167 (DTPGH), and 217 to 220 (NKID).

The protein belongs to the TRAFAC class translation factor GTPase superfamily. Classic translation factor GTPase family. LepA subfamily.

The protein resides in the mitochondrion inner membrane. It catalyses the reaction GTP + H2O = GDP + phosphate + H(+). Its function is as follows. Promotes mitochondrial protein synthesis. May act as a fidelity factor of the translation reaction, by catalyzing a one-codon backward translocation of tRNAs on improperly translocated ribosomes. Binds to mitochondrial ribosomes in a GTP-dependent manner. In Phaeodactylum tricornutum (strain CCAP 1055/1), this protein is Translation factor GUF1 homolog, mitochondrial.